A 138-amino-acid chain; its full sequence is Putative transcriptional regulatory protein NedR (138 aa).

The segment at 1 to 25 (MCWGRSWTFGRSSSKGWRPTSSASS) is disordered. Polar residues predominate over residues 9–25 (FGRSSSKGWRPTSSASS).

In terms of biological role, may serve as a transcriptional regulator. The protein is Putative transcriptional regulatory protein NedR (nedR) of Micromonospora viridifaciens.